Here is a 56-residue protein sequence, read N- to C-terminus: Large ribosomal subunit protein bL32 (56 aa).

A disordered region spans residues 1-28; that stretch reads MAVQQNRKTRSKRGMRRSHDALTTAALS. The segment covering 7–16 has biased composition (basic residues); sequence RKTRSKRGMR.

Belongs to the bacterial ribosomal protein bL32 family.

In Vibrio vulnificus (strain CMCP6), this protein is Large ribosomal subunit protein bL32.